Reading from the N-terminus, the 421-residue chain is Histidine--tRNA ligase (421 aa).

Belongs to the class-II aminoacyl-tRNA synthetase family. Homodimer.

The protein localises to the cytoplasm. The enzyme catalyses tRNA(His) + L-histidine + ATP = L-histidyl-tRNA(His) + AMP + diphosphate + H(+). This is Histidine--tRNA ligase from Francisella tularensis subsp. mediasiatica (strain FSC147).